The sequence spans 259 residues: Protein unc-50 homolog (259 aa).

Positions 1-15 (MLPTSSPQIHRNGSL) are enriched in polar residues. Positions 1-22 (MLPTSSPQIHRNGSLSERDAAR) are disordered. Residues 1 to 80 (MLPTSSPQIH…TKDQWARDDP (80 aa)) lie on the Cytoplasmic side of the membrane. The chain crosses the membrane as a helical span at residues 81-101 (AFLVLLSIWLCVSTVGFGLVL). Topologically, residues 102 to 110 (DMGFVETLT) are lumenal. The helical transmembrane segment at 111 to 131 (LLLWVVFIDCIGVGLLISTLM) threads the bilayer. The Cytoplasmic segment spans residues 132 to 162 (WFVTNKYLMKHPNRDYDVEWGYAFDVHLNAF). A helical membrane pass occupies residues 163–183 (YPLLVILHFLQLFFINHVVVI). Residues 184–198 (SSDWFLGYFVGNTMW) are Lumenal-facing. Residues 199 to 219 (LIAIGYYVYITFLGYSALPFL) form a helical membrane-spanning segment. Residues 220–222 (KNT) are Cytoplasmic-facing. A helical transmembrane segment spans residues 223-243 (VVLLYPFALLGLLYVLSISLG). Topologically, residues 244–259 (WNFTKGLCWFYKHRVQ) are lumenal.

It belongs to the unc-50 family.

The protein localises to the nucleus inner membrane. It is found in the golgi apparatus membrane. Its function is as follows. Involved in the cell surface expression of neuronal nicotinic receptors. Binds RNA. The chain is Protein unc-50 homolog (unc50) from Danio rerio (Zebrafish).